The primary structure comprises 485 residues: Adenosylhomocysteinase (485 aa).

Substrate is bound by residues T64, D139, and E205. NAD(+) is bound at residue 206 to 208; that stretch reads TTT. Substrate is bound by residues K235 and D239. NAD(+) is bound by residues N240, 269–274, E292, N327, 348–350, and N397; these read GYGDVG and IGH.

Belongs to the adenosylhomocysteinase family. NAD(+) is required as a cofactor.

The enzyme catalyses S-adenosyl-L-homocysteine + H2O = L-homocysteine + adenosine. The protein operates within amino-acid biosynthesis; L-homocysteine biosynthesis; L-homocysteine from S-adenosyl-L-homocysteine: step 1/1. Adenosylhomocysteine is a competitive inhibitor of S-adenosyl-L-methionine-dependent methyl transferase reactions; therefore adenosylhomocysteinase may play a key role in the control of methylations via regulation of the intracellular concentration of adenosylhomocysteine. This is Adenosylhomocysteinase (SAHH) from Solanum lycopersicum (Tomato).